We begin with the raw amino-acid sequence, 360 residues long: Biotin synthase (360 aa).

The interval 1–21 is disordered; it reads MTQLNIAPASTDTAAASNNNA. Residues 62-289 enclose the Radical SAM core domain; the sequence is NTVQLSTLLS…RAMVRLSAGR (228 aa). Residues C77, C81, and C84 each contribute to the [4Fe-4S] cluster site. 4 residues coordinate [2Fe-2S] cluster: C121, C152, C212, and R284.

This sequence belongs to the radical SAM superfamily. Biotin synthase family. Homodimer. It depends on [4Fe-4S] cluster as a cofactor. [2Fe-2S] cluster is required as a cofactor.

The catalysed reaction is (4R,5S)-dethiobiotin + (sulfur carrier)-SH + 2 reduced [2Fe-2S]-[ferredoxin] + 2 S-adenosyl-L-methionine = (sulfur carrier)-H + biotin + 2 5'-deoxyadenosine + 2 L-methionine + 2 oxidized [2Fe-2S]-[ferredoxin]. Its pathway is cofactor biosynthesis; biotin biosynthesis; biotin from 7,8-diaminononanoate: step 2/2. In terms of biological role, catalyzes the conversion of dethiobiotin (DTB) to biotin by the insertion of a sulfur atom into dethiobiotin via a radical-based mechanism. The sequence is that of Biotin synthase from Paraburkholderia xenovorans (strain LB400).